The chain runs to 623 residues: DNA mismatch repair protein MutL (623 aa).

A compositionally biased stretch (polar residues) spans A353–S368. The tract at residues A353–H389 is disordered.

This sequence belongs to the DNA mismatch repair MutL/HexB family.

Functionally, this protein is involved in the repair of mismatches in DNA. It is required for dam-dependent methyl-directed DNA mismatch repair. May act as a 'molecular matchmaker', a protein that promotes the formation of a stable complex between two or more DNA-binding proteins in an ATP-dependent manner without itself being part of a final effector complex. This Brucella melitensis biotype 1 (strain ATCC 23456 / CCUG 17765 / NCTC 10094 / 16M) protein is DNA mismatch repair protein MutL.